The primary structure comprises 353 residues: Photosystem II D2 protein (353 aa).

The residue at position 2 (Thr2) is an N-acetylthreonine. The residue at position 2 (Thr2) is a Phosphothreonine. A helical transmembrane segment spans residues 41–61; that stretch reads CAYFALGGWFTGTTFVTSWYT. Chlorophyll a is bound at residue His118. A helical membrane pass occupies residues 125–141; sequence GFMLRQFELARSVQLRP. Residues Gln130 and Asn143 each coordinate pheophytin a. Residues 153-166 traverse the membrane as a helical segment; it reads VFVSVFLIYPLGQS. His198 provides a ligand contact to chlorophyll a. Residues 208 to 228 traverse the membrane as a helical segment; that stretch reads AALLCAIHGATVENTLFEDGD. A plastoquinone contacts are provided by His215 and Phe262. Position 215 (His215) interacts with Fe cation. Position 269 (His269) interacts with Fe cation. Residues 279–295 traverse the membrane as a helical segment; that stretch reads GLWMSALGVVGLALNLR.

This sequence belongs to the reaction center PufL/M/PsbA/D family. PSII is composed of 1 copy each of membrane proteins PsbA, PsbB, PsbC, PsbD, PsbE, PsbF, PsbH, PsbI, PsbJ, PsbK, PsbL, PsbM, PsbT, PsbX, PsbY, PsbZ, Psb30/Ycf12, at least 3 peripheral proteins of the oxygen-evolving complex and a large number of cofactors. It forms dimeric complexes. It depends on The D1/D2 heterodimer binds P680, chlorophylls that are the primary electron donor of PSII, and subsequent electron acceptors. It shares a non-heme iron and each subunit binds pheophytin, quinone, additional chlorophylls, carotenoids and lipids. There is also a Cl(-1) ion associated with D1 and D2, which is required for oxygen evolution. The PSII complex binds additional chlorophylls, carotenoids and specific lipids. as a cofactor.

The protein localises to the plastid. It localises to the chloroplast thylakoid membrane. It carries out the reaction 2 a plastoquinone + 4 hnu + 2 H2O = 2 a plastoquinol + O2. Photosystem II (PSII) is a light-driven water:plastoquinone oxidoreductase that uses light energy to abstract electrons from H(2)O, generating O(2) and a proton gradient subsequently used for ATP formation. It consists of a core antenna complex that captures photons, and an electron transfer chain that converts photonic excitation into a charge separation. The D1/D2 (PsbA/PsbD) reaction center heterodimer binds P680, the primary electron donor of PSII as well as several subsequent electron acceptors. D2 is needed for assembly of a stable PSII complex. The polypeptide is Photosystem II D2 protein (Aethionema grandiflorum (Persian stone-cress)).